Here is a 318-residue protein sequence, read N- to C-terminus: 2-desacetyl-2-hydroxyethyl bacteriochlorophyllide A dehydrogenase (318 aa).

The protein operates within porphyrin-containing compound metabolism; bacteriochlorophyll biosynthesis (light-independent). This protein catalyzes the penultimate step in bacteriochlorophyll a biosynthesis. The polypeptide is 2-desacetyl-2-hydroxyethyl bacteriochlorophyllide A dehydrogenase (bchC) (Cereibacter sphaeroides (strain ATCC 17023 / DSM 158 / JCM 6121 / CCUG 31486 / LMG 2827 / NBRC 12203 / NCIMB 8253 / ATH 2.4.1.) (Rhodobacter sphaeroides)).